Reading from the N-terminus, the 470-residue chain is Argininosuccinate lyase (470 aa).

Belongs to the lyase 1 family. Argininosuccinate lyase subfamily.

It is found in the cytoplasm. The enzyme catalyses 2-(N(omega)-L-arginino)succinate = fumarate + L-arginine. Its pathway is amino-acid biosynthesis; L-arginine biosynthesis; L-arginine from L-ornithine and carbamoyl phosphate: step 3/3. This chain is Argininosuccinate lyase, found in Prochlorococcus marinus (strain MIT 9303).